Reading from the N-terminus, the 121-residue chain is Large ribosomal subunit protein bL12 (121 aa).

This sequence belongs to the bacterial ribosomal protein bL12 family. Homodimer. Part of the ribosomal stalk of the 50S ribosomal subunit. Forms a multimeric L10(L12)X complex, where L10 forms an elongated spine to which 2 to 4 L12 dimers bind in a sequential fashion. Binds GTP-bound translation factors.

Its function is as follows. Forms part of the ribosomal stalk which helps the ribosome interact with GTP-bound translation factors. Is thus essential for accurate translation. The chain is Large ribosomal subunit protein bL12 from Klebsiella pneumoniae (strain 342).